A 447-amino-acid polypeptide reads, in one-letter code: Teichoic acids export ATP-binding protein TagH (447 aa).

The ABC transporter domain maps to 24 to 246 (DKLKTLFSVF…YRAFLHRYNH (223 aa)). Residue 60–67 (GLNGSGKS) participates in ATP binding. Residues 247–447 (FTEPQKESYQ…QVLKLKEVTE (201 aa)) are unknown. Residues 359-393 (NAVKTTKTKPASTKESRQQEEVQPSPTNVPENNNS) form a disordered region. Composition is skewed to polar residues over residues 360 to 369 (AVKTTKTKPA) and 379 to 393 (EVQP…NNNS). Residues 398-442 (STYTVEVGDSVSLIAENHGLTIEQLQTLNPEIIEVPIYPGQVLKL) form the LysM domain.

Belongs to the ABC transporter superfamily. Teichoic acids exporter (TC 3.A.1.104.1) family. In terms of assembly, the complex is composed of two ATP-binding proteins (TagH) and two transmembrane proteins (TagG).

The protein resides in the cell membrane. It carries out the reaction ATP + H2O + teichoic acidSide 1 = ADP + phosphate + teichoic acidSide 2.. Its function is as follows. Part of the ABC transporter complex TagGH involved in teichoic acids export. Responsible for energy coupling to the transport system. The sequence is that of Teichoic acids export ATP-binding protein TagH from Enterococcus faecalis (strain ATCC 700802 / V583).